Here is a 114-residue protein sequence, read N- to C-terminus: Fumarate reductase subunit D (114 aa).

Helical transmembrane passes span 24–44 (ISALAFPVLILILGILLPLGI), 49–69 (GIIAFAHHWFGKLVILVLTIF), and 94–114 (LIFYGLAVLYTVVAIWGVASI).

Belongs to the FrdD family. In terms of assembly, part of an enzyme complex containing four subunits: a flavoprotein (FrdA), an iron-sulfur protein (FrdB), and two hydrophobic anchor proteins (FrdC and FrdD).

It is found in the cell inner membrane. In terms of biological role, anchors the catalytic components of the fumarate reductase complex to the cell membrane, binds quinones. The protein is Fumarate reductase subunit D of Actinobacillus succinogenes (strain ATCC 55618 / DSM 22257 / CCUG 43843 / 130Z).